The primary structure comprises 77 residues: Acyl carrier protein (77 aa).

The Carrier domain maps to 2–77; sequence ADVMERVTKI…DVVDYINNNQ (76 aa). Serine 37 is modified (O-(pantetheine 4'-phosphoryl)serine).

It belongs to the acyl carrier protein (ACP) family. In terms of processing, 4'-phosphopantetheine is transferred from CoA to a specific serine of apo-ACP by AcpS. This modification is essential for activity because fatty acids are bound in thioester linkage to the sulfhydryl of the prosthetic group.

The protein resides in the cytoplasm. The protein operates within lipid metabolism; fatty acid biosynthesis. Its function is as follows. Carrier of the growing fatty acid chain in fatty acid biosynthesis. The sequence is that of Acyl carrier protein from Shouchella clausii (strain KSM-K16) (Alkalihalobacillus clausii).